Reading from the N-terminus, the 96-residue chain is Citrate lyase acyl carrier protein (96 aa).

Serine 14 carries the O-(phosphoribosyl dephospho-coenzyme A)serine modification.

This sequence belongs to the CitD family. As to quaternary structure, oligomer with a subunit composition of (alpha,beta,gamma)6.

It is found in the cytoplasm. In terms of biological role, covalent carrier of the coenzyme of citrate lyase. This is Citrate lyase acyl carrier protein from Pectobacterium carotovorum subsp. carotovorum (strain PC1).